The primary structure comprises 157 residues: Peptide methionine sulfoxide reductase MsrA (157 aa).

Cys13 is an active-site residue.

The protein belongs to the MsrA Met sulfoxide reductase family.

It catalyses the reaction L-methionyl-[protein] + [thioredoxin]-disulfide + H2O = L-methionyl-(S)-S-oxide-[protein] + [thioredoxin]-dithiol. The catalysed reaction is [thioredoxin]-disulfide + L-methionine + H2O = L-methionine (S)-S-oxide + [thioredoxin]-dithiol. Its function is as follows. Has an important function as a repair enzyme for proteins that have been inactivated by oxidation. Catalyzes the reversible oxidation-reduction of methionine sulfoxide in proteins to methionine. The sequence is that of Peptide methionine sulfoxide reductase MsrA from Methanococcus maripaludis (strain C7 / ATCC BAA-1331).